We begin with the raw amino-acid sequence, 40 residues long: Large ribosomal subunit protein bL36 (40 aa).

This sequence belongs to the bacterial ribosomal protein bL36 family.

This chain is Large ribosomal subunit protein bL36, found in Corynebacterium jeikeium (strain K411).